The following is a 371-amino-acid chain: Transaldolase (371 aa).

An Isoglutamyl lysine isopeptide (Lys-Gln) (interchain with Q-Cter in protein Pup) cross-link involves residue lysine 132. Lysine 142 serves as the catalytic Schiff-base intermediate with substrate.

The protein belongs to the transaldolase family. Type 2 subfamily.

Its subcellular location is the cytoplasm. It carries out the reaction D-sedoheptulose 7-phosphate + D-glyceraldehyde 3-phosphate = D-erythrose 4-phosphate + beta-D-fructose 6-phosphate. It participates in carbohydrate degradation; pentose phosphate pathway; D-glyceraldehyde 3-phosphate and beta-D-fructose 6-phosphate from D-ribose 5-phosphate and D-xylulose 5-phosphate (non-oxidative stage): step 2/3. Functionally, transaldolase is important for the balance of metabolites in the pentose-phosphate pathway. This is Transaldolase (tal) from Mycolicibacterium smegmatis (strain ATCC 700084 / mc(2)155) (Mycobacterium smegmatis).